The chain runs to 3184 residues: Cilia and flagella-associated protein 47 (3184 aa).

The region spanning 1729–1851 (SDSERILLSW…LCVYLYERLP (123 aa)) is the Calponin-homology (CH) domain. The disordered stretch occupies residues 2491–2514 (RDEEESQEETDTEKDFSSQETPSD). Over residues 2493 to 2502 (EEESQEETDT) the composition is skewed to acidic residues.

As to quaternary structure, interacts with CFAP65. As to expression, highly expressed in spermatzoa (at protein level).

It is found in the cytoplasm. The protein localises to the cytoskeleton. The protein resides in the flagellum basal body. Plays a role in flagellar formation and sperm motility. The sequence is that of Cilia and flagella-associated protein 47 from Mus musculus (Mouse).